The primary structure comprises 196 residues: Corrinoid adenosyltransferase CobA (196 aa).

36–42 (GNGKGKT) lines the ATP pocket.

Belongs to the Cob(I)alamin adenosyltransferase family. As to quaternary structure, homodimer.

The protein localises to the cytoplasm. The enzyme catalyses 2 cob(II)yrinate a,c diamide + reduced [electron-transfer flavoprotein] + 2 ATP = 2 adenosylcob(III)yrinate a,c-diamide + 2 triphosphate + oxidized [electron-transfer flavoprotein] + 3 H(+). The catalysed reaction is 2 cob(II)alamin + reduced [electron-transfer flavoprotein] + 2 ATP = 2 adenosylcob(III)alamin + 2 triphosphate + oxidized [electron-transfer flavoprotein] + 3 H(+). It participates in cofactor biosynthesis; adenosylcobalamin biosynthesis; adenosylcobalamin from cob(II)yrinate a,c-diamide: step 2/7. Its function is as follows. Required for both de novo synthesis of the corrin ring for the assimilation of exogenous corrinoids. Participates in the adenosylation of a variety of incomplete and complete corrinoids. The chain is Corrinoid adenosyltransferase CobA (btuR) from Salmonella typhimurium (strain LT2 / SGSC1412 / ATCC 700720).